We begin with the raw amino-acid sequence, 396 residues long: NADH-quinone oxidoreductase subunit D 1 (396 aa).

Belongs to the complex I 49 kDa subunit family. NDH-1 is composed of 14 different subunits. Subunits NuoB, C, D, E, F, and G constitute the peripheral sector of the complex.

The protein resides in the cell inner membrane. The catalysed reaction is a quinone + NADH + 5 H(+)(in) = a quinol + NAD(+) + 4 H(+)(out). Its function is as follows. NDH-1 shuttles electrons from NADH, via FMN and iron-sulfur (Fe-S) centers, to quinones in the respiratory chain. The immediate electron acceptor for the enzyme in this species is believed to be ubiquinone. Couples the redox reaction to proton translocation (for every two electrons transferred, four hydrogen ions are translocated across the cytoplasmic membrane), and thus conserves the redox energy in a proton gradient. The chain is NADH-quinone oxidoreductase subunit D 1 from Sinorhizobium medicae (strain WSM419) (Ensifer medicae).